Consider the following 633-residue polypeptide: MGQASSQAASGEHSGVKPLGMLVAAVGVVYGDIGTSPLYTLKEVFSGSYGVQVNHDGVFGILALIFWSLVWVVSIKYVLFILRADNQGEGGIMALTALARRASASYPRLRSVLVILGLIGASLFYGDSMITPAISVLSAVEGLELAFSGLEHWVVPLALVVLVALFLIQKHGTDRIGKLFGPVMVAWFLVLGGLGINGILQHPEVLQALNPVWGVRFFIVHPGMGVAILGAVVLALTGAEALYADMGHFGRKPIARAWFALVLPALVLNYFGQGALLLENPEAARNPFYLLAPGWALIPLVVLATLATVIASQAVISGAFSLTRQAIQLGYIPRMHIQHTSSAEQGQIYIGAVNWSLMVGVILLVLGFESSGALASAYGVAVTGTMLITSILVAAVMLLLWKWPPVLAVPVLLGFLLVDGLFFAANVPKIFQGGAFPVLAGIVLFILMTTWKRGKELLVDRLDEGGLPLPIFISSIRVQPPHRVQGTAVFLTARPDAVPHALLHNLLHNQVLHEQVVLLTVVYEDIPRVPANRRFEVDSYGEGFFRVILHFGFTDEPDVPEALKLCHLDELDFSPMRTTYFLSRETVIASKLVGMARWREALFAFMLKNANGNLRFFKLPVNRVIELGTQVEM.

Helical transmembrane passes span 19-39 (LGMLVAAVGVVYGDIGTSPLY), 61-81 (ILALIFWSLVWVVSIKYVLFI), 112-132 (VLVILGLIGASLFYGDSMITP), 148-168 (SGLEHWVVPLALVVLVALFLI), 179-199 (LFGPVMVAWFLVLGGLGINGI), 217-237 (FFIVHPGMGVAILGAVVLALT), 258-278 (WFALVLPALVLNYFGQGALLL), 290-310 (LLAPGWALIPLVVLATLATVI), 348-368 (IYIGAVNWSLMVGVILLVLGF), 380-400 (VAVTGTMLITSILVAAVMLLL), 405-425 (PVLAVPVLLGFLLVDGLFFAA), and 430-450 (IFQGGAFPVLAGIVLFILMTT).

This sequence belongs to the HAK/KUP transporter (TC 2.A.72) family.

It localises to the cell inner membrane. The enzyme catalyses K(+)(in) + H(+)(in) = K(+)(out) + H(+)(out). In terms of biological role, transport of potassium into the cell. Likely operates as a K(+):H(+) symporter. This is Probable potassium transport system protein Kup from Pseudomonas fluorescens (strain ATCC BAA-477 / NRRL B-23932 / Pf-5).